Reading from the N-terminus, the 57-residue chain is Large ribosomal subunit protein bL32 (57 aa).

The disordered stretch occupies residues 1-38 (MAVQQNKPTRSKRGMRRSHDALTAVTSLSVDQTSGEKH). The span at 24–33 (AVTSLSVDQT) shows a compositional bias: polar residues.

This sequence belongs to the bacterial ribosomal protein bL32 family.

In Enterobacter sp. (strain 638), this protein is Large ribosomal subunit protein bL32.